The chain runs to 87 residues: Cytochrome c oxidase assembly factor 3, mitochondrial (87 aa).

The chain crosses the membrane as a helical span at residues N47 to S69.

Belongs to the COA3 family.

It localises to the mitochondrion membrane. In terms of biological role, plays a critical role in the biogenesis and activity of cytochrome c oxidase (COX) (complex IV). The protein is Cytochrome c oxidase assembly factor 3, mitochondrial (Ccdc56) of Drosophila melanogaster (Fruit fly).